Here is a 469-residue protein sequence, read N- to C-terminus: Glutamate--tRNA ligase (469 aa).

Positions 9 to 19 (PSPTGMFHVGG) match the 'HIGH' region motif. The Zn(2+) site is built by Cys100, Cys102, Cys122, and Asp124. The 'KMSKS' region motif lies at 232–236 (KLSKR). Lys235 lines the ATP pocket.

The protein belongs to the class-I aminoacyl-tRNA synthetase family. Glutamate--tRNA ligase type 1 subfamily. As to quaternary structure, monomer. Requires Zn(2+) as cofactor.

The protein resides in the cytoplasm. The catalysed reaction is tRNA(Glu) + L-glutamate + ATP = L-glutamyl-tRNA(Glu) + AMP + diphosphate. Its function is as follows. Catalyzes the attachment of glutamate to tRNA(Glu) in a two-step reaction: glutamate is first activated by ATP to form Glu-AMP and then transferred to the acceptor end of tRNA(Glu). The polypeptide is Glutamate--tRNA ligase (Salinispora arenicola (strain CNS-205)).